The following is a 350-amino-acid chain: uncharacterized protein (350 aa).

Residues 164-327 enclose the Integrase catalytic domain; the sequence is NDPLPGYVEV…EKTRIGARVV (164 aa).

This is an uncharacterized protein from Sinorhizobium fredii (strain NBRC 101917 / NGR234).